A 431-amino-acid polypeptide reads, in one-letter code: PHD finger-containing protein 1 (431 aa).

The PHD-type zinc-finger motif lies at 7 to 59 (GPVCQTCGDIGFEEALVFCDSCMFESIHRYCLGITPIPFTEYITWICEDCDNS). 8 residues coordinate Zn(2+): cysteine 10, cysteine 13, cysteine 25, cysteine 28, histidine 34, cysteine 37, cysteine 53, and cysteine 56. The tract at residues 125–221 (EAADSSSVPD…QESSDSRKPH (97 aa)) is disordered. Over residues 128–139 (DSSSVPDHSSCT) the composition is skewed to polar residues. Residues 160-171 (KKKKKKKKKKSI) show a composition bias toward basic residues. Residues 191 to 202 (VVEPVEVSSSSP) show a composition bias toward low complexity. Residues 205 to 221 (ETMESKRQESSDSRKPH) show a composition bias toward basic and acidic residues.

In terms of assembly, interacts directly with AIPP3/BDT1.

Together with AIPP3/BDT1, cooperates to form a BAH-PHD bivalent histone reader complex able to read histone H3 lysine 27 trimethylation (H3K27me3) histone marks in order to regulate transcription, especially to prevent early flowering; promotes AIPP3/BDT1 binding to H3K27me3. The polypeptide is PHD finger-containing protein 1 (Arabidopsis thaliana (Mouse-ear cress)).